A 91-amino-acid polypeptide reads, in one-letter code: DNA-directed RNA polymerase subunit omega (91 aa).

Belongs to the RNA polymerase subunit omega family. As to quaternary structure, the RNAP catalytic core consists of 2 alpha, 1 beta, 1 beta' and 1 omega subunit. When a sigma factor is associated with the core the holoenzyme is formed, which can initiate transcription.

It carries out the reaction RNA(n) + a ribonucleoside 5'-triphosphate = RNA(n+1) + diphosphate. Functionally, promotes RNA polymerase assembly. Latches the N- and C-terminal regions of the beta' subunit thereby facilitating its interaction with the beta and alpha subunits. The polypeptide is DNA-directed RNA polymerase subunit omega (Yersinia enterocolitica serotype O:8 / biotype 1B (strain NCTC 13174 / 8081)).